Reading from the N-terminus, the 350-residue chain is Protein-glutamate methylesterase/protein-glutamine glutaminase (350 aa).

In terms of domain architecture, Response regulatory spans R5–M122. D56 is subject to 4-aspartylphosphate. Residues L152–M338 form the CheB-type methylesterase domain. Active-site residues include S164, H190, and D286.

Belongs to the CheB family. Post-translationally, phosphorylated by CheA. Phosphorylation of the N-terminal regulatory domain activates the methylesterase activity.

The protein localises to the cytoplasm. The enzyme catalyses [protein]-L-glutamate 5-O-methyl ester + H2O = L-glutamyl-[protein] + methanol + H(+). The catalysed reaction is L-glutaminyl-[protein] + H2O = L-glutamyl-[protein] + NH4(+). Involved in chemotaxis. Part of a chemotaxis signal transduction system that modulates chemotaxis in response to various stimuli. Catalyzes the demethylation of specific methylglutamate residues introduced into the chemoreceptors (methyl-accepting chemotaxis proteins or MCP) by CheR. Also mediates the irreversible deamidation of specific glutamine residues to glutamic acid. The sequence is that of Protein-glutamate methylesterase/protein-glutamine glutaminase from Enterobacter cloacae.